The primary structure comprises 831 residues: Periplasmic nitrate reductase (831 aa).

The segment at residues M1 to A29 is a signal peptide (tat-type signal). One can recognise a 4Fe-4S Mo/W bis-MGD-type domain in the interval I41–D97. Positions 48, 51, 55, and 83 each coordinate [4Fe-4S] cluster. Mo-bis(molybdopterin guanine dinucleotide) is bound by residues K85, Q152, N177, C181, W214 to M221, S245 to H249, G264 to D266, M375, Q379, N485, S511 to D512, K534, D561, and T721 to S730. W797 is a substrate binding site. Positions 805 and 822 each coordinate Mo-bis(molybdopterin guanine dinucleotide).

This sequence belongs to the prokaryotic molybdopterin-containing oxidoreductase family. NasA/NapA/NarB subfamily. In terms of assembly, component of the periplasmic nitrate reductase NapAB complex composed of NapA and NapB. [4Fe-4S] cluster serves as cofactor. Mo-bis(molybdopterin guanine dinucleotide) is required as a cofactor. In terms of processing, predicted to be exported by the Tat system. The position of the signal peptide cleavage has not been experimentally proven.

It is found in the periplasm. The catalysed reaction is 2 Fe(II)-[cytochrome] + nitrate + 2 H(+) = 2 Fe(III)-[cytochrome] + nitrite + H2O. Functionally, catalytic subunit of the periplasmic nitrate reductase complex NapAB. Receives electrons from NapB and catalyzes the reduction of nitrate to nitrite. The polypeptide is Periplasmic nitrate reductase (Cereibacter sphaeroides (strain ATCC 17023 / DSM 158 / JCM 6121 / CCUG 31486 / LMG 2827 / NBRC 12203 / NCIMB 8253 / ATH 2.4.1.) (Rhodobacter sphaeroides)).